The chain runs to 1096 residues: Eukaryotic translation initiation factor 3 subunit A (1096 aa).

Residues 323–502 enclose the PCI domain; the sequence is QATRVLLATL…GSIHFGAADA (180 aa). Coiled coils occupy residues 591 to 643, 677 to 761, and 811 to 839; these read SERQ…IDRK, SVLR…RMQK, and KEGA…ERRA. Residues 808 to 852 show a composition bias toward basic and acidic residues; sequence ELPKEGAEERMASAREVAEQTRRDEQEKERRAVRESQRPSKREIV. Residues 808 to 1096 form a disordered region; the sequence is ELPKEGAEER…ADDDRNWRQK (289 aa). Residues 865–875 show a composition bias toward polar residues; the sequence is AQPTQPRTISS. Composition is skewed to basic and acidic residues over residues 878–890, 933–942, and 955–973; these read FGER…RYRE, SNREQARGEA, and QRDR…KRGE. Positions 1008–1023 are enriched in polar residues; the sequence is DSSQRTSAATPTTQPW. Residues 1085–1096 show a composition bias toward basic and acidic residues; the sequence is GAADDDRNWRQK.

Belongs to the eIF-3 subunit A family. Component of the eukaryotic translation initiation factor 3 (eIF-3) complex.

Its subcellular location is the cytoplasm. RNA-binding component of the eukaryotic translation initiation factor 3 (eIF-3) complex, which is involved in protein synthesis of a specialized repertoire of mRNAs and, together with other initiation factors, stimulates binding of mRNA and methionyl-tRNAi to the 40S ribosome. The eIF-3 complex specifically targets and initiates translation of a subset of mRNAs involved in cell proliferation. The chain is Eukaryotic translation initiation factor 3 subunit A from Brugia malayi (Filarial nematode worm).